Reading from the N-terminus, the 153-residue chain is Transcription antitermination protein NusB (153 aa).

Belongs to the NusB family.

Functionally, involved in transcription antitermination. Required for transcription of ribosomal RNA (rRNA) genes. Binds specifically to the boxA antiterminator sequence of the ribosomal RNA (rrn) operons. In Symbiobacterium thermophilum (strain DSM 24528 / JCM 14929 / IAM 14863 / T), this protein is Transcription antitermination protein NusB.